Consider the following 423-residue polypeptide: Deferrochelatase (423 aa).

Residues 1–35 (MQYKDENGVNEPSRRRLLKVIGALALAGSCPVAHA) constitute a signal peptide (tat-type signal). 236–238 (GTA) serves as a coordination point for heme b. Residues 236–238 (GTA) and R296 contribute to the protoporphyrin IX site. Heme b-binding positions include H329, 334–336 (NPR), and R347.

In terms of assembly, homodimer. Part of a ferrous iron transporter composed of EfeU, EfeO and EfeB. However, this EfeUOB tripartite iron transporter is defective in E.coli strain K12 due to a frameshift mutation in EfeU. Requires heme b as cofactor. In terms of processing, exported by the Tat system. The position of the signal peptide cleavage has been experimentally proven. Can also be exported by the Sec system.

The protein localises to the periplasm. It carries out the reaction heme b + 2 H(+) = protoporphyrin IX + Fe(2+). Its function is as follows. Involved in the recovery of exogenous heme iron. Extracts iron from heme while preserving the protoporphyrin ring intact. Also displays peroxidase activity on guaiacol in vitro. The polypeptide is Deferrochelatase (efeB) (Escherichia coli (strain K12)).